The chain runs to 344 residues: Phosphate acyltransferase (344 aa).

Belongs to the PlsX family. As to quaternary structure, homodimer. Probably interacts with PlsY.

The protein resides in the cytoplasm. It catalyses the reaction a fatty acyl-[ACP] + phosphate = an acyl phosphate + holo-[ACP]. Its pathway is lipid metabolism; phospholipid metabolism. Catalyzes the reversible formation of acyl-phosphate (acyl-PO(4)) from acyl-[acyl-carrier-protein] (acyl-ACP). This enzyme utilizes acyl-ACP as fatty acyl donor, but not acyl-CoA. This chain is Phosphate acyltransferase, found in Acaryochloris marina (strain MBIC 11017).